A 193-amino-acid chain; its full sequence is MEIVFVSENENKITEAREILLPLGFQPIFCGVTCRETGLTFTENAVLKAQAAVGSVKDVPIMADDSGICVDALNGMPGVLSSRWSQDGRNIDLLLWQMRDVPDVHRTAHFVCSIACVMPNTEVRTVSSVWHGRILHVPDGTGGFGYDPVFLPDGYSVSAAGLGSDLKNRISHRYKALRLMSSLLKRTYSSCHA.

7 to 12 contributes to the substrate binding site; that stretch reads SENENK. Catalysis depends on D65, which acts as the Proton acceptor. Position 65 (D65) interacts with Mg(2+). Residues S66, 144–147, K167, and 172–173 contribute to the substrate site; these read FGYD and HR.

The protein belongs to the HAM1 NTPase family. As to quaternary structure, homodimer. It depends on Mg(2+) as a cofactor.

It carries out the reaction XTP + H2O = XMP + diphosphate + H(+). It catalyses the reaction dITP + H2O = dIMP + diphosphate + H(+). The enzyme catalyses ITP + H2O = IMP + diphosphate + H(+). In terms of biological role, pyrophosphatase that catalyzes the hydrolysis of nucleoside triphosphates to their monophosphate derivatives, with a high preference for the non-canonical purine nucleotides XTP (xanthosine triphosphate), dITP (deoxyinosine triphosphate) and ITP. Seems to function as a house-cleaning enzyme that removes non-canonical purine nucleotides from the nucleotide pool, thus preventing their incorporation into DNA/RNA and avoiding chromosomal lesions. This is dITP/XTP pyrophosphatase from Tropheryma whipplei (strain TW08/27) (Whipple's bacillus).